Consider the following 421-residue polypeptide: Subtilisin-like protease 2 (421 aa).

The signal sequence occupies residues 1–16 (MQLLNFGLLLLPFVAG). Positions 17–122 (DLAPQPEPLL…VHPDQHVYLA (106 aa)) are excised as a propeptide. The Inhibitor I9 domain occupies 36-122 (QYIVTLKEGL…VHPDQHVYLA (87 aa)). The Peptidase S8 domain maps to 131–421 (RWGLGYMSSK…ERKFTLPKYY (291 aa)). Active-site charge relay system residues include Asp169 and His201. 3 N-linked (GlcNAc...) asparagine glycosylation sites follow: Asn248, Asn261, and Asn348. The active-site Charge relay system is the Ser357. Asn388 carries an N-linked (GlcNAc...) asparagine glycan.

The protein belongs to the peptidase S8 family.

Its subcellular location is the secreted. Functionally, secreted subtilisin-like serine protease with keratinolytic activity that contributes to pathogenicity. This Arthroderma benhamiae (strain ATCC MYA-4681 / CBS 112371) (Trichophyton mentagrophytes) protein is Subtilisin-like protease 2 (SUB2).